Consider the following 683-residue polypeptide: Stromal interaction molecule 1 (683 aa).

The signal sequence occupies residues 1-22 (MDVCARLALWLLWGLLLHHGQS). At 23 to 211 (LSQSHSEKAT…LLTRHNHLKD (189 aa)) the chain is on the extracellular side. EF-hand domains lie at 62–95 (SFDAVRSIHKLMDDDANGDVDVEESDEFLREDLN) and 100–124 (TVKHSTFHGEDKLISVEDLWKAWKS). Ca(2+) is bound by residues Asp74, Asp76, Asn78, Asp80, and Glu85. N-linked (GlcNAc...) asparagine glycans are attached at residues Asn129 and Asn169. Positions 130–198 (WTVDEVVQWL…QLKALDTVLF (69 aa)) constitute an SAM domain. Residues 212 to 232 (FMLVVSIVIGVGGCWFAYIQN) traverse the membrane as a helical segment. The Cytoplasmic portion of the chain corresponds to 233-683 (RYSKEHMKKM…LKIFKKPLKK (451 aa)). Residues 246-440 (LEGLHRAEQS…IEILCGFQIV (195 aa)) adopt a coiled-coil conformation. Residue Ser255 is modified to Phosphoserine. The segment at 342–440 (PEALQKWLQL…IEILCGFQIV (99 aa)) is SOAR/CAD. The interval 473–481 (DDVDDMDEE) is contributes to fast Ca(2+)-dependent inactivation of CRAC channels. A compositionally biased stretch (low complexity) spans 488–497 (MQSPSLQSSV). A disordered region spans residues 488–535 (MQSPSLQSSVRQRLTEPQHGLGSQRDLTHSDSESSLHMSDRQRLAPKP). A Phosphothreonine modification is found at Thr502. At Ser510 the chain carries Phosphoserine. Over residues 513–530 (DLTHSDSESSLHMSDRQR) the composition is skewed to basic and acidic residues. At Thr515 the chain carries Phosphothreonine. Phosphoserine is present on residues Ser517, Ser519, Ser521, Ser522, Ser565, Ser573, Ser606, Ser616, and Ser626. A disordered region spans residues 597-683 (LSSPALPSGS…LKIFKKPLKK (87 aa)). The short motif at 640–643 (TRIP) is the Microtubule tip localization signal element. The span at 653 to 664 (EEDNGSIGEETD) shows a compositional bias: acidic residues. Ser658 carries the phosphoserine modification. Position 663 is a phosphothreonine (Thr663). Position 666 is a phosphoserine (Ser666). Basic residues predominate over residues 668–683 (GRKKFPLKIFKKPLKK). The tract at residues 670-683 (KKFPLKIFKKPLKK) is required for generation of inwardly rectifying CRAC currents.

In terms of assembly, monomer in the presence of Ca(2+). It oligomerizes in absence of Ca(2+). Forms homooligomers and heterooligomers with STIM2. Interacts with pore-forming subunits of CRAC channels, ORAI1, ORAI2 and ORAI3; this interaction is potentiated upon Ca(2+) store depletion. Interacts (via the transmembrane region and the SOAR/CAD domain) with SPPL3; the interaction promotes the binding of STIM1 to ORAI1. Interacts with ORAI1. Interacts with MAPRE1; probably required for targeting to the growing microtubule plus ends. Interacts with CRACR2A/EFCAB4B; the interaction is direct and takes place in absence of Ca(2+). Forms a complex with CRACR2A/EFCAB4B and ORAI1 at low concentration of Ca(2+), the complex dissociates at elevated Ca(2+) concentrations. Interacts with SARAF, promoting a slow inactivation of STIM1-dependent SOCE activity, possibly by facilitating the deoligomerization of STIM1. Interacts with EFHB; the interaction takes place upon Ca(2+)-store depletion and inhibits the association with SARAF. Interacts with ASPH. Interacts with SLC35G1; intracellular Ca(2+)-dependent. May interact with ATP1A1, ATP2A2, ATP2B1, ATP2B4, KPNB1 and XPO1; through SLC35G1. Interacts with TMEM203. Interacts with STIMATE, promoting STIM1 conformational switch. Interacts with TMEM178A. Interacts with CASQ1 (via C-terminal end and preferentially with the monomeric form); this interaction increases in response to a depletion of intracellular calcium, decreases both STIM1 aggregation and clustering, interaction of STIM1 with ORAI1 and store-operated Ca(2+) entry (SOCE) activity. In terms of processing, glycosylation is required for cell surface expression. Phosphorylated predominantly on Ser residues.

It localises to the cell membrane. It is found in the endoplasmic reticulum membrane. Its subcellular location is the sarcoplasmic reticulum. The protein localises to the cytoplasm. The protein resides in the cytoskeleton. In terms of biological role, acts as a Ca(2+) sensor that gates two major inward rectifying Ca(2+) channels at the plasma membrane: Ca(2+) release-activated Ca(2+) (CRAC) channels and arachidonate-regulated Ca(2+)-selective (ARC) channels. Plays a role in mediating store-operated Ca(2+) entry (SOCE), a Ca(2+) influx following depletion of intracellular Ca(2+) stores. Upon Ca(2+) depletion, translocates from the endoplasmic reticulum to the plasma membrane where it activates CRAC channel pore-forming subunits ORA1, ORA2 and ORAI3 to generate sustained and oscillatory Ca(2+) entry. Involved in enamel formation. This Bos taurus (Bovine) protein is Stromal interaction molecule 1 (STIM1).